Consider the following 560-residue polypeptide: Cytosolic purine 5'-nucleotidase (560 aa).

The active-site Nucleophile is the Asp-52. IMP is bound by residues Asp-52 and Asp-54. Mg(2+) contacts are provided by Asp-52 and Asp-54. Asp-54 acts as the Proton donor in catalysis. 2 residues coordinate ATP: Arg-144 and Asn-154. Residues Arg-202, Asp-206, Lys-215, Thr-249, Asn-250, Ser-251, and Lys-292 each coordinate IMP. Residue Asp-351 coordinates Mg(2+). Phosphoserine is present on Ser-418. The ATP site is built by Gln-453 and Arg-456. Ser-502, Ser-511, and Ser-527 each carry phosphoserine. Residues 541-560 are disordered; it reads PQEITHCHDEDDDEEEEEEE. Residues 548–560 form a required for tetramer assembly region; sequence HDEDDDEEEEEEE. Acidic residues predominate over residues 550–560; the sequence is EDDDEEEEEEE.

It belongs to the 5'(3')-deoxyribonucleotidase family. As to quaternary structure, homotetramer. It depends on Mg(2+) as a cofactor.

The protein resides in the cytoplasm. It localises to the cytosol. It catalyses the reaction a ribonucleoside 5'-phosphate + H2O = a ribonucleoside + phosphate. The enzyme catalyses a 2'-deoxyribonucleoside + a ribonucleoside 5'-phosphate = a ribonucleoside + a 2'-deoxyribonucleoside 5'-phosphate. The catalysed reaction is IMP + H2O = inosine + phosphate. It carries out the reaction GMP + H2O = guanosine + phosphate. It catalyses the reaction dGMP + H2O = 2'-deoxyguanosine + phosphate. The enzyme catalyses dIMP + H2O = 2'-deoxyinosine + phosphate. The catalysed reaction is XMP + H2O = xanthosine + phosphate. It carries out the reaction inosine + GMP = guanosine + IMP. It catalyses the reaction dGMP + inosine = 2'-deoxyguanosine + IMP. The enzyme catalyses dIMP + inosine = 2'-deoxyinosine + IMP. The catalysed reaction is inosine + UMP = uridine + IMP. It carries out the reaction inosine + CMP = cytidine + IMP. It catalyses the reaction inosine + AMP = IMP + adenosine. Allosterically activated by various compounds including ATP, 2,3-BPG/2,3-Bisphosphoglyceric acid and Ap4A/P1,P4-bis(5'-adenosyl) tetraphosphate. Binding of an allosteric activator is a prerequisiste to magnesium and substrate binding. Inhibited by inorganic phosphate. In terms of biological role, broad specificity cytosolic 5'-nucleotidase that catalyzes the dephosphorylation of 6-hydroxypurine nucleoside 5'-monophosphates. In addition, possesses a phosphotransferase activity by which it can transfer a phosphate from a donor nucleoside monophosphate to an acceptor nucleoside, preferably inosine, deoxyinosine and guanosine. Has the highest activities for IMP and GMP followed by dIMP, dGMP and XMP. Could also catalyze the transfer of phosphates from pyrimidine monophosphates but with lower efficiency. Through these activities regulates the purine nucleoside/nucleotide pools within the cell. This Mus musculus (Mouse) protein is Cytosolic purine 5'-nucleotidase.